Reading from the N-terminus, the 155-residue chain is Ribosomal RNA large subunit methyltransferase H (155 aa).

S-adenosyl-L-methionine-binding positions include leucine 72, glycine 103, and 122–127; that span reads LGRMVW.

This sequence belongs to the RNA methyltransferase RlmH family. Homodimer.

The protein localises to the cytoplasm. The catalysed reaction is pseudouridine(1915) in 23S rRNA + S-adenosyl-L-methionine = N(3)-methylpseudouridine(1915) in 23S rRNA + S-adenosyl-L-homocysteine + H(+). Its function is as follows. Specifically methylates the pseudouridine at position 1915 (m3Psi1915) in 23S rRNA. The polypeptide is Ribosomal RNA large subunit methyltransferase H (Cereibacter sphaeroides (strain ATCC 17029 / ATH 2.4.9) (Rhodobacter sphaeroides)).